The sequence spans 150 residues: Macrodomain Ter protein (150 aa).

This sequence belongs to the MatP family. In terms of assembly, homodimer.

It localises to the cytoplasm. Required for spatial organization of the terminus region of the chromosome (Ter macrodomain) during the cell cycle. Prevents early segregation of duplicated Ter macrodomains during cell division. Binds specifically to matS, which is a 13 bp signature motif repeated within the Ter macrodomain. This Citrobacter koseri (strain ATCC BAA-895 / CDC 4225-83 / SGSC4696) protein is Macrodomain Ter protein.